We begin with the raw amino-acid sequence, 770 residues long: Integrin beta-2 (770 aa).

Positions 1 to 22 (MLPQRPQLLLLAGLLSLQSVLS) are cleaved as a signal peptide. Gln23 carries the post-translational modification Pyrrolidone carboxylic acid. The Extracellular segment spans residues 23–701 (QECTKYKVST…DMLECVKGPN (679 aa)). One can recognise a PSI domain in the interval 24–74 (ECTKYKVSTCRDCIESGPSCAWCQKLNFTGQGEPDSTRCDTRAQLLSKGCP). 28 disulfide bridges follow: Cys25-Cys43, Cys33-Cys447, Cys36-Cys62, Cys46-Cys73, Cys191-Cys198, Cys246-Cys286, Cys386-Cys400, Cys420-Cys445, Cys449-Cys467, Cys459-Cys470, Cys472-Cys481, Cys483-Cys514, Cys497-Cys512, Cys506-Cys517, Cys519-Cys534, Cys536-Cys559, Cys541-Cys557, Cys549-Cys562, Cys564-Cys573, Cys575-Cys598, Cys582-Cys596, Cys590-Cys601, Cys603-Cys612, Cys615-Cys618, Cys622-Cys663, Cys628-Cys647, Cys631-Cys643, and Cys671-Cys696. N-linked (GlcNAc...) asparagine glycosylation is found at Asn50 and Asn116. The region spanning 124–363 (GYPIDLYYLM…ELIKSAYNKL (240 aa)) is the VWFA domain. 2 residues coordinate Mg(2+): Ser136 and Ser138. Positions 138, 141, 142, and 173 each coordinate Ca(2+). Residues Asn229, Asp231, Pro233, and Glu234 each contribute to the Ca(2+) site. Residue Glu234 participates in Mg(2+) binding. Asn254 carries N-linked (GlcNAc...) asparagine glycosylation. The Ca(2+) site is built by Asp264 and Glu347. Positions 397 to 399 (RGD) match the Cell attachment site motif. I-EGF domains are found at residues 449–482 (CREASRDRGVCGGRGSMECGVCRCDAGYIGKNCE), 483–535 (CQTH…QFCE), 536–574 (CDNVNCERYDGQVCGGDKRGLCFCGACRCNDQYEGSACQ), and 575–613 (CLKSTQGCLNLNGVECSGRGRCRCNVCQCDPGYQPPLCI). Asn501 carries an N-linked (GlcNAc...) asparagine glycan. Asn642 carries an N-linked (GlcNAc...) asparagine glycan. The helical transmembrane segment at 702-724 (IAAIVGGTVGGVVLVGILLLAIW) threads the bilayer. Topologically, residues 725–770 (KALTHLSDLREYHRFEKEKLKSQWNNDNPLFKSATTTVMNPKFAES) are cytoplasmic. 2 positions are modified to phosphoserine: Ser746 and Ser757. Phosphothreonine is present on residues Thr759 and Thr761.

Belongs to the integrin beta chain family. In terms of assembly, heterodimer of an alpha and a beta subunit. The ITGB2 beta subunit associates with the ITGAL, ITGAM, ITGAX or ITGAD alpha subunits. Found in a complex with CD177 and ITGAM/CD11b. Interacts with FGR. Interacts with COPS5 and RANBP9. Interacts with FLNA (via filamin repeats 4, 9, 12, 17, 19, 21, and 23). Interacts with THBD. In terms of processing, both Ser-746 and Ser-757 become phosphorylated when T-cells are exposed to phorbol esters. Phosphorylation on Thr-759 (but not on Ser-757) allows interaction with 14-3-3 proteins.

Its subcellular location is the cell membrane. It localises to the membrane raft. Functionally, integrin ITGAL/ITGB2 is a receptor for ICAM1, ICAM2, ICAM3 and ICAM4. Integrin ITGAL/ITGB2 is also a receptor for the secreted form of ubiquitin-like protein ISG15; the interaction is mediated by ITGAL. Integrins ITGAM/ITGB2 and ITGAX/ITGB2 are receptors for the iC3b fragment of the third complement component and for fibrinogen. Integrin ITGAX/ITGB2 recognizes the sequence G-P-R in fibrinogen alpha-chain. Integrin ITGAM/ITGB2 recognizes P1 and P2 peptides of fibrinogen gamma chain. Integrin ITGAM/ITGB2 is also a receptor for factor X. Integrin ITGAD/ITGB2 is a receptor for ICAM3 and VCAM1. Contributes to natural killer cell cytotoxicity. Involved in leukocyte adhesion and transmigration of leukocytes including T-cells and neutrophils. Triggers neutrophil transmigration during lung injury through PTK2B/PYK2-mediated activation. Integrin ITGAL/ITGB2 in association with ICAM3, contributes to apoptotic neutrophil phagocytosis by macrophages. In association with alpha subunit ITGAM/CD11b, required for CD177-PRTN3-mediated activation of TNF primed neutrophils. The sequence is that of Integrin beta-2 (ITGB2) from Ovis canadensis (Bighorn sheep).